Consider the following 130-residue polypeptide: MANTQYAGTGRRKVSVARVRLTPGSGKITINNRSFEEYIPAANLRAVVIQPFAVTSTDGTYDVNVNVVGGGFAGQAGATRHGIARALLQVDPDFRPALKSAGLLTRDSRMVERKKPGLKKARRASQFSKR.

The tract at residues 105–130 (TRDSRMVERKKPGLKKARRASQFSKR) is disordered. Over residues 106-115 (RDSRMVERKK) the composition is skewed to basic and acidic residues. Basic residues predominate over residues 116–130 (PGLKKARRASQFSKR).

It belongs to the universal ribosomal protein uS9 family.

The polypeptide is Small ribosomal subunit protein uS9 (Oenococcus oeni (strain ATCC BAA-331 / PSU-1)).